A 635-amino-acid chain; its full sequence is DNA primase (635 aa).

The segment at 41 to 65 (CPFHDEKSPSFSVSPAKQMYYCFGC) adopts a CHC2-type zinc-finger fold. The Toprim domain occupies 265-348 (DEAILVEGYF…SGQVNLRILN (84 aa)). Residues E271, D317, and D319 each contribute to the Mg(2+) site.

This sequence belongs to the DnaG primase family. As to quaternary structure, monomer. Interacts with DnaB. It depends on Zn(2+) as a cofactor. Mg(2+) is required as a cofactor.

The enzyme catalyses ssDNA + n NTP = ssDNA/pppN(pN)n-1 hybrid + (n-1) diphosphate.. Its function is as follows. RNA polymerase that catalyzes the synthesis of short RNA molecules used as primers for DNA polymerase during DNA replication. This chain is DNA primase, found in Synechocystis sp. (strain ATCC 27184 / PCC 6803 / Kazusa).